The following is a 121-amino-acid chain: Basic phospholipase A2 homolog AppP2 (121 aa).

Cystine bridges form between C26-C115, C28-C44, C43-C95, C49-C121, C50-C88, C57-C81, and C75-C86. The interval 105 to 117 (KKYKAYFKLKCKK) is important for membrane-damaging activities in eukaryotes and bacteria; heparin-binding.

This sequence belongs to the phospholipase A2 family. Group II subfamily. K49 sub-subfamily. As to quaternary structure, monomer. As to expression, expressed by the venom gland.

The protein resides in the secreted. Snake venom phospholipase A2 (PLA2) that lacks enzymatic activity. Displays edema-inducing activities. Is myotoxic. A model of myotoxic mechanism has been proposed: an apo Lys49-PLA2 is activated by the entrance of a hydrophobic molecule (e.g. fatty acid) at the hydrophobic channel of the protein leading to a reorientation of a monomer. This reorientation causes a transition between 'inactive' to 'active' states, causing alignment of C-terminal and membrane-docking sites (MDoS) side-by-side and putting the membrane-disruption sites (MDiS) in the same plane, exposed to solvent and in a symmetric position for both monomers. The MDoS region stabilizes the toxin on membrane by the interaction of charged residues with phospholipid head groups. Subsequently, the MDiS region destabilizes the membrane with penetration of hydrophobic residues. This insertion causes a disorganization of the membrane, allowing an uncontrolled influx of ions (i.e. calcium and sodium), and eventually triggering irreversible intracellular alterations and cell death. This chain is Basic phospholipase A2 homolog AppP2, found in Agkistrodon piscivorus piscivorus (Eastern cottonmouth).